Here is a 603-residue protein sequence, read N- to C-terminus: Glutamyl-tRNA(Gln) amidotransferase subunit E (603 aa).

It belongs to the GatB/GatE family. GatE subfamily. Heterodimer of GatD and GatE.

The enzyme catalyses L-glutamyl-tRNA(Gln) + L-glutamine + ATP + H2O = L-glutaminyl-tRNA(Gln) + L-glutamate + ADP + phosphate + H(+). Functionally, allows the formation of correctly charged Gln-tRNA(Gln) through the transamidation of misacylated Glu-tRNA(Gln) in organisms which lack glutaminyl-tRNA synthetase. The reaction takes place in the presence of glutamine and ATP through an activated gamma-phospho-Glu-tRNA(Gln). The GatDE system is specific for glutamate and does not act on aspartate. The polypeptide is Glutamyl-tRNA(Gln) amidotransferase subunit E (Thermoplasma acidophilum (strain ATCC 25905 / DSM 1728 / JCM 9062 / NBRC 15155 / AMRC-C165)).